The primary structure comprises 379 residues: Nematocin receptor 1 (379 aa).

The Extracellular segment spans residues 19 to 48; that stretch reads HNLYLFQMLELQENITDSQPMDPPSLEIMM. N-linked (GlcNAc...) asparagine glycosylation occurs at Asn32. Residues 49-69 form a helical membrane-spanning segment; it reads LHHLMIILVTLFGNTLLIYVI. The Cytoplasmic segment spans residues 70-95; that stretch reads YKNNAVLRRKRVTPVQMLMLHMCAAD. A helical membrane pass occupies residues 96–116; it reads ILFALISVGPTMAITATVPFF. The Extracellular segment spans residues 117–124; it reads YGPNLLCK. Cys123 and Cys196 are disulfide-bonded. Residues 125–145 form a helical membrane-spanning segment; that stretch reads LTKFLQVIPMYASSFLLVAIS. Topologically, residues 146–168 are cytoplasmic; it reads ADRYQAICRPLASMKSSIYNRPA. A helical membrane pass occupies residues 169–189; sequence LYSGIAWTAAILFSTPQLYLF. At 190–207 the chain is on the extracellular side; the sequence is EKRNGDCSENYTTALQYQ. N-linked (GlcNAc...) asparagine glycosylation occurs at Asn199. Residues 208–228 form a helical membrane-spanning segment; the sequence is LYVCLFNSVVWLLPSAIAGWL. Residues 229–289 lie on the Cytoplasmic side of the membrane; the sequence is YLCVCKAVWK…DRRRVQTVKL (61 aa). A helical membrane pass occupies residues 290 to 310; sequence TLTIVAANFVLWAPFCITSVI. The Extracellular segment spans residues 311–320; that stretch reads DAVWPTAINS. N-linked (GlcNAc...) asparagine glycosylation occurs at Asn319. The helical transmembrane segment at 321–343 threads the bilayer; the sequence is TFATYIMFFGNLNSCMNPWLWFH. Residues 344–379 lie on the Cytoplasmic side of the membrane; that stretch reads FNRKQLKRACPCRKSSEPLIQSLVYVHVMTSEQSDF.

This sequence belongs to the G-protein coupled receptor 1 family. Vasopressin/oxytocin receptor subfamily. As to expression, detected in the left ASE gustatory neuron, the chemosensory neuron pairs ASH and ADF, and the PQR tail neuron. In males, detected in hook and tail sensory neurons involved in vulval sensing and hermaphrodite contact, and in spicule protractor muscles.

Its subcellular location is the cell membrane. Receptor for nematocin. The activity of this receptor is mediated by G proteins which activate a phosphatidylinositol-calcium second messenger system. The activity of this receptor may be modulated by ntr-2, leading to reduced intracellular cAMP production. Plays a role in gustatory associative learning. Also plays a role in male mating behavior. The sequence is that of Nematocin receptor 1 from Caenorhabditis elegans.